A 162-amino-acid chain; its full sequence is Cyanate hydratase (162 aa).

Active-site residues include R103, E106, and S129.

This sequence belongs to the cyanase family.

The enzyme catalyses cyanate + hydrogencarbonate + 3 H(+) = NH4(+) + 2 CO2. Catalyzes the reaction of cyanate with bicarbonate to produce ammonia and carbon dioxide. The sequence is that of Cyanate hydratase from Pyrenophora tritici-repentis (strain Pt-1C-BFP) (Wheat tan spot fungus).